Here is a 394-residue protein sequence, read N- to C-terminus: Protein TsgA homolog (394 aa).

12 consecutive transmembrane segments (helical) span residues 11–31, 51–71, 76–96, 101–121, 134–154, 162–182, 206–226, 246–266, 274–294, 302–322, 334–354, and 363–383; these read WISY…GIVM, FLNA…EIIP, LVFG…GHNL, ISMF…TFLV, LLFT…AAAM, WYWV…LTLC, VGVL…LGFI, QLVS…SFIL, IVTV…STDN, ILAL…LGSL, FILT…GPIV, and LETA…LGFF.

The protein belongs to the major facilitator superfamily. TsgA family.

The protein resides in the cell inner membrane. The chain is Protein TsgA homolog from Yersinia pestis bv. Antiqua (strain Antiqua).